The following is a 201-amino-acid chain: Recombination protein RecR (201 aa).

Residues 60-75 form a C4-type zinc finger; sequence CSTCGNVDTADPCMIC. Positions 83–178 constitute a Toprim domain; the sequence is GTIIVVEDVS…KVTRLAHGVP (96 aa).

This sequence belongs to the RecR family.

May play a role in DNA repair. It seems to be involved in an RecBC-independent recombinational process of DNA repair. It may act with RecF and RecO. The sequence is that of Recombination protein RecR from Mesorhizobium japonicum (strain LMG 29417 / CECT 9101 / MAFF 303099) (Mesorhizobium loti (strain MAFF 303099)).